The chain runs to 169 residues: Putative phosphoesterase SACOL1020 (169 aa).

Histidine 34 acts as the Proton donor in catalysis. 2 consecutive short sequence motifs (HXTX) follow at residues 34-37 (HVTI) and 115-118 (HFTI). Histidine 115 serves as the catalytic Proton acceptor.

This sequence belongs to the 2H phosphoesterase superfamily. YjcG family.

The polypeptide is Putative phosphoesterase SACOL1020 (Staphylococcus aureus (strain COL)).